Reading from the N-terminus, the 812-residue chain is Toll-like receptor 10 (812 aa).

The signal sequence occupies residues 1–19; the sequence is MRYIRSIYIFCSIVTSVRS. Topologically, residues 20–577 are extracellular; the sequence is GASELPEERE…VHLPEISCNT (558 aa). LRR repeat units follow at residues 24 to 46, 49 to 70, 73 to 94, 97 to 118, and 119 to 139; these read LPEE…PEGL, ITTT…DFRS, KLKV…TFEF, ELSY…SLAG, and LRHL…VETG. A glycan (N-linked (GlcNAc...) asparagine) is linked at asparagine 33. Asparagine 140 is a glycosylation site (N-linked (GlcNAc...) asparagine). One copy of the LRR 6 repeat lies at 143–166; it reads HLETLGLSGAKIQKSDFQKIAHLQ. Asparagine 189 carries an N-linked (GlcNAc...) asparagine glycan. LRR repeat units follow at residues 296 to 321, 325 to 348, 350 to 373, and 374 to 395; these read SNTV…ESIY, TKMD…PMYP, RFQY…IQLP, and HLKT…SHFA. N-linked (GlcNAc...) asparagine glycosylation occurs at asparagine 331. Asparagine 397 carries an N-linked (GlcNAc...) asparagine glycan. LRR repeat units follow at residues 399-420, 423-443, 445-467, 468-489, and 490-510; these read SLRH…NCLW, TLVT…GCLP, NIQI…THLT, SLRE…SHFR, and RLLV…DFFQ. A glycan (N-linked (GlcNAc...) asparagine) is linked at asparagine 428. Residues 523–577 enclose the LRRCT domain; that stretch reads NPFRCTCELRDFIQLGKYSEGMMVGWSDSYICEYPLNLKGTQLKDVHLPEISCNT. A helical membrane pass occupies residues 578 to 598; it reads GLLIVTIVVVMLVLGMAVAFC. Residues 599 to 812 are Cytoplasmic-facing; that stretch reads CLHFDLPWYL…AISLIRTDCL (214 aa). A TIR domain is found at 633 to 776; it reads VQFHVFISYS…LFWANLRAAL (144 aa).

This sequence belongs to the Toll-like receptor family. Binds MYD88 via their respective TIR domains.

The protein localises to the membrane. Functionally, participates in the innate immune response to microbial agents. Acts via MYD88 and TRAF6, leading to NF-kappa-B activation, cytokine secretion and the inflammatory response. In Bos taurus (Bovine), this protein is Toll-like receptor 10 (TLR10).